Reading from the N-terminus, the 214-residue chain is Threonylcarbamoyl-AMP synthase (214 aa).

Residues 9–214 (TDSTIQAATW…GDALTGQVIR (206 aa)) form the YrdC-like domain.

The protein belongs to the SUA5 family. TsaC subfamily.

Its subcellular location is the cytoplasm. The catalysed reaction is L-threonine + hydrogencarbonate + ATP = L-threonylcarbamoyladenylate + diphosphate + H2O. Its function is as follows. Required for the formation of a threonylcarbamoyl group on adenosine at position 37 (t(6)A37) in tRNAs that read codons beginning with adenine. Catalyzes the conversion of L-threonine, HCO(3)(-)/CO(2) and ATP to give threonylcarbamoyl-AMP (TC-AMP) as the acyladenylate intermediate, with the release of diphosphate. This is Threonylcarbamoyl-AMP synthase from Psychrobacter cryohalolentis (strain ATCC BAA-1226 / DSM 17306 / VKM B-2378 / K5).